Here is a 267-residue protein sequence, read N- to C-terminus: DNA repair protein RecO (267 aa).

Belongs to the RecO family.

Its function is as follows. Involved in DNA repair and RecF pathway recombination. The polypeptide is DNA repair protein RecO (Prochlorococcus marinus (strain MIT 9303)).